The chain runs to 222 residues: Small ribosomal subunit protein eS1 (222 aa).

It belongs to the eukaryotic ribosomal protein eS1 family.

The sequence is that of Small ribosomal subunit protein eS1 from Methanocaldococcus jannaschii (strain ATCC 43067 / DSM 2661 / JAL-1 / JCM 10045 / NBRC 100440) (Methanococcus jannaschii).